A 156-amino-acid polypeptide reads, in one-letter code: Biotin carboxyl carrier protein of acetyl-CoA carboxylase (156 aa).

Positions 80 to 156 (GNVVRSPMVG…EFDQPLFTIV (77 aa)) constitute a Biotinyl-binding domain. An N6-biotinyllysine modification is found at Lys122.

As to quaternary structure, homodimer.

It participates in lipid metabolism; fatty acid biosynthesis. This protein is a component of the acetyl coenzyme A carboxylase complex; first, biotin carboxylase catalyzes the carboxylation of the carrier protein and then the transcarboxylase transfers the carboxyl group to form malonyl-CoA. The protein is Biotin carboxyl carrier protein of acetyl-CoA carboxylase (accB) of Pseudomonas aeruginosa (strain ATCC 15692 / DSM 22644 / CIP 104116 / JCM 14847 / LMG 12228 / 1C / PRS 101 / PAO1).